A 235-amino-acid chain; its full sequence is Succinate dehydrogenase iron-sulfur subunit (235 aa).

Cys-53, Cys-58, and Cys-73 together coordinate [2Fe-2S] cluster. The 4Fe-4S ferredoxin-type domain maps to 133–163 (ERAKLDGLYECILCACCSSSCPSYWWNPDKF). Residues Cys-143, Cys-146, and Cys-149 each coordinate [4Fe-4S] cluster. Residue Cys-153 participates in [3Fe-4S] cluster binding. Trp-158 contributes to the a ubiquinone binding site. [3Fe-4S] cluster contacts are provided by Cys-200 and Cys-206. Cys-210 provides a ligand contact to [4Fe-4S] cluster.

It belongs to the succinate dehydrogenase/fumarate reductase iron-sulfur protein family. Part of an enzyme complex containing four subunits: a flavoprotein, an iron-sulfur protein, cytochrome b-556 and a hydrophobic protein. [2Fe-2S] cluster is required as a cofactor. Requires [3Fe-4S] cluster as cofactor. [4Fe-4S] cluster serves as cofactor.

It catalyses the reaction a quinone + succinate = fumarate + a quinol. It functions in the pathway carbohydrate metabolism; tricarboxylic acid cycle; fumarate from succinate (bacterial route): step 1/1. This is Succinate dehydrogenase iron-sulfur subunit (sdhB) from Coxiella burnetii (strain RSA 493 / Nine Mile phase I).